The primary structure comprises 142 residues: Dynein light chain Tctex-type protein 2B (142 aa).

The protein belongs to the dynein light chain Tctex-type family. Light chain of the cytoplasmic dynein complex 2, a multisubunit complex composed at least of eleven different proteins. The cytoplasmic dynein 2 complex consists of two catalytic heavy chains (HCs) and a number of non-catalytic subunits presented by intermediate chains (ICs), light intermediate chains (LICs) and light chains (LCs). Among them, a heavy chain (DYNC2H1), two intermediate chains (DYNC2I2 and DYNC2I1), a light intermediate chain (DYNC2LI1), and a light chain (DYNLT2B) are unique to the dynein-2 complex, but a subset of the light chains are also shared by dynein-1 and dynein-2 complexes. Interacts with DYNC2I1. The dimer DYNLT2B-DYNLT1/DYNLT3 interacts with DYNC2I1; this interaction is crucial for retrograde trafficking of ciliary proteins.

The protein localises to the dynein axonemal particle. Its function is as follows. Acts as one of several non-catalytic accessory components of the cytoplasmic dynein 2 complex (dynein-2 complex), a motor protein complex that drives the movement of cargos along microtubules within cilia and flagella in concert with the intraflagellar transport (IFT) system. Required for proper retrograde ciliary transport. This is Dynein light chain Tctex-type protein 2B from Homo sapiens (Human).